A 430-amino-acid chain; its full sequence is UDP-N-acetylglucosamine 1-carboxyvinyltransferase (430 aa).

Position 22–23 (22–23 (KN)) interacts with phosphoenolpyruvate. Arg-102 is a UDP-N-acetyl-alpha-D-glucosamine binding site. Residue Cys-126 is the Proton donor of the active site. 2-(S-cysteinyl)pyruvic acid O-phosphothioketal is present on Cys-126. Residues 131–135 (RPVDL), 172–175 (KVSV), Asp-317, and Ile-339 each bind UDP-N-acetyl-alpha-D-glucosamine.

Belongs to the EPSP synthase family. MurA subfamily.

It localises to the cytoplasm. It catalyses the reaction phosphoenolpyruvate + UDP-N-acetyl-alpha-D-glucosamine = UDP-N-acetyl-3-O-(1-carboxyvinyl)-alpha-D-glucosamine + phosphate. It participates in cell wall biogenesis; peptidoglycan biosynthesis. Its function is as follows. Cell wall formation. Adds enolpyruvyl to UDP-N-acetylglucosamine. The polypeptide is UDP-N-acetylglucosamine 1-carboxyvinyltransferase (Sinorhizobium fredii (strain NBRC 101917 / NGR234)).